We begin with the raw amino-acid sequence, 290 residues long: MGLVMWLRTGVLMAILTGLLMGIGYLFGGPNVAFIMFLFSMFFNFITYWYSDRIVLSWYNARIVDEYEAPELYAIVRDLAQRAGLPTPRVAIIPSETPNAFATGRDPKHAVVAVTQGLLRILNRDELEGVIGHELTHIKNRDILIGTVAAAMAGAIMQLAYWARWIAIFGGFNRDRDDGGDIIGAILVAILAPIAAMLIQAAISRSREFLADEGGARISGKPHALASALMKIEQAVNYRPMREGNPATAHMFIVNPFRGMSIANLFSTHPPTEARIERLRKIAEEMGIYF.

The next 2 helical transmembrane spans lie at 5–27 and 32–51; these read MWLRTGVLMAILTGLLMGIGYLF and VAFIMFLFSMFFNFITYWYS. His133 contacts Zn(2+). The active site involves Glu134. Residue His137 coordinates Zn(2+). 2 consecutive transmembrane segments (helical) span residues 143–163 and 182–202; these read ILIGTVAAAMAGAIMQLAYWA and IIGAILVAILAPIAAMLIQAA. Residue Glu208 participates in Zn(2+) binding.

This sequence belongs to the peptidase M48B family. Zn(2+) is required as a cofactor.

Its subcellular location is the cell membrane. The chain is Protease HtpX homolog from Thermococcus kodakarensis (strain ATCC BAA-918 / JCM 12380 / KOD1) (Pyrococcus kodakaraensis (strain KOD1)).